A 48-amino-acid chain; its full sequence is Entericidin B (48 aa).

The signal sequence occupies residues 1–21; it reads MVKKTIAAIFSVLVLSTVLTA. A lipid anchor (N-palmitoyl cysteine) is attached at Cys-22. Cys-22 is lipidated: S-diacylglycerol cysteine.

The protein belongs to the EcnA/EcnB lipoprotein family.

It localises to the cell membrane. Functionally, plays a role in the bacteriolysis. Is activated under conditions of high osmolarity by the factor sigma S. Entericidin A functions as an antidote. This Escherichia coli O157:H7 protein is Entericidin B (ecnB).